Here is a 58-residue protein sequence, read N- to C-terminus: Small ribosomal subunit protein bS21 (58 aa).

The segment at 27–58 is disordered; sequence GVLSEARKHEHYEKPSVKRKKKSEAARKRKFK. Over residues 31-42 the composition is skewed to basic and acidic residues; the sequence is EARKHEHYEKPS. Positions 43–58 are enriched in basic residues; that stretch reads VKRKKKSEAARKRKFK.

This sequence belongs to the bacterial ribosomal protein bS21 family.

This is Small ribosomal subunit protein bS21 from Desulfitobacterium hafniense (strain DSM 10664 / DCB-2).